The following is a 73-amino-acid chain: Putative antitoxin M1627_0365 (73 aa).

The protein belongs to the UPF0330 family.

In terms of biological role, possibly the antitoxin component of a type II toxin-antitoxin (TA) system. The protein is Putative antitoxin M1627_0365 of Saccharolobus islandicus (strain M.16.27) (Sulfolobus islandicus).